Here is a 466-residue protein sequence, read N- to C-terminus: tRNA modification GTPase MnmE (466 aa).

(6S)-5-formyl-5,6,7,8-tetrahydrofolate is bound by residues arginine 22, glutamate 87, and arginine 126. Residues 222–382 (GWRTVIVGRP…LTELIRRMVY (161 aa)) form the TrmE-type G domain. Asparagine 232 lines the K(+) pocket. Residues 232–237 (NVGKSS), 251–257 (TEIPGTT), and 276–279 (DTAG) each bind GTP. Serine 236 is a Mg(2+) binding site. Residues threonine 251, isoleucine 253, and threonine 256 each coordinate K(+). A Mg(2+)-binding site is contributed by threonine 257. Residue lysine 466 coordinates (6S)-5-formyl-5,6,7,8-tetrahydrofolate.

The protein belongs to the TRAFAC class TrmE-Era-EngA-EngB-Septin-like GTPase superfamily. TrmE GTPase family. Homodimer. Heterotetramer of two MnmE and two MnmG subunits. K(+) serves as cofactor.

The protein resides in the cytoplasm. Exhibits a very high intrinsic GTPase hydrolysis rate. Involved in the addition of a carboxymethylaminomethyl (cmnm) group at the wobble position (U34) of certain tRNAs, forming tRNA-cmnm(5)s(2)U34. The polypeptide is tRNA modification GTPase MnmE (Heliobacterium modesticaldum (strain ATCC 51547 / Ice1)).